Consider the following 87-residue polypeptide: uncharacterized protein (87 aa).

Residues 29 to 49 (ILWMIIFVVIIAVIIYILISP) form a helical membrane-spanning segment.

It localises to the membrane. This is an uncharacterized protein from Methanocaldococcus jannaschii (strain ATCC 43067 / DSM 2661 / JAL-1 / JCM 10045 / NBRC 100440) (Methanococcus jannaschii).